The following is a 523-amino-acid chain: Signal peptide peptidase-like 2A (523 aa).

A signal peptide spans 1–25 (MGLLHSLHAPAAALLWSCLLGLAAA). The Lumenal segment spans residues 26–175 (QEAILHASTN…PSWPNFDYTL (150 aa)). 6 N-linked (GlcNAc...) asparagine glycosylation sites follow: Asn51, Asn61, Asn69, Asn119, Asn129, and Asn135. A PA domain is found at 70 to 155 (LTGTALCHLS…KDFKDMKETL (86 aa)). Residues 176-196 (VVIFVIAVFTVALGGYWSGLI) traverse the membrane as a helical segment. Over 197–224 (ELENMKSVEDAEDRETRKKKDDYLTFSP) the chain is Cytoplasmic. Residues 225–245 (LTVVVFVVICCIMIVLLYFFY) traverse the membrane as a helical segment. Residues 246 to 247 (RW) are Lumenal-facing. A helical transmembrane segment spans residues 248-268 (LVYVMIAIFCIASSMSLYNCL). Over 269-288 (SALIHRMPCGQCTILCCGKN) the chain is Cytoplasmic. A helical membrane pass occupies residues 289 to 309 (IKVSLIFLSGLCISVAVVWAV). The Lumenal segment spans residues 310-315 (FRNEDR). Residues 316-336 (WAWILQDILGIAFCLNLIKTM) form a helical membrane-spanning segment. Residues 337 to 344 (KLPNFMSC) lie on the Cytoplasmic side of the membrane. The helical transmembrane segment at 345–365 (VILLGLLLIYDVFFVFITPFI) threads the bilayer. Asp355 is an active-site residue. Topologically, residues 366–403 (TKNGESIMVELAAGPFENAEKLPVVIRVPKLMGYSVMS) are lumenal. Residues 404 to 424 (VCSVPVSVLGFGDIIVPGLLI) form a helical membrane-spanning segment. Asp416 is an active-site residue. Over 425–440 (AYCRRFDVQTGSSIYY) the chain is Cytoplasmic. The chain crosses the membrane as a helical span at residues 441 to 461 (ISSTIAYAVGMIITFVVLMVM). Residues 462–463 (KT) are Lumenal-facing. Residues 464-484 (GQPALLYLVPCTLITVSVVAW) form a helical membrane-spanning segment. Residues 466–468 (PAL) carry the PAL motif. Residues 485-523 (SRKEMKKFWKGSSYQVMDHLDYSTNEENPVTTDEQIVQQ) lie on the Cytoplasmic side of the membrane. The YXXo lysosomal targeting motif motif lies at 498 to 501 (YQVM).

It belongs to the peptidase A22B family. Interacts with ITM2B. Post-translationally, glycosylated.

The protein resides in the late endosome membrane. Its subcellular location is the lysosome membrane. It is found in the membrane. Intramembrane-cleaving aspartic protease (I-CLiP) that cleaves type II membrane signal peptides in the hydrophobic plane of the membrane. Functions in FASLG, ITM2B and TNF processing. Catalyzes the intramembrane cleavage of the anchored fragment of shed TNF-alpha (TNF), which promotes the release of the intracellular domain (ICD) for signaling to the nucleus. Also responsible for the intramembrane cleavage of Fas antigen ligand FASLG, which promotes the release of the intracellular FasL domain (FasL ICD). Essential for degradation of the invariant chain CD74 that plays a central role in the function of antigen-presenting cells in the immune system. Plays a role in the regulation of innate and adaptive immunity. The sequence is that of Signal peptide peptidase-like 2A from Mus musculus (Mouse).